The chain runs to 605 residues: Elongation factor 4 (605 aa).

Positions E11–T193 constitute a tr-type G domain. Residues D23–T28 and N140–D143 each bind GTP.

It belongs to the TRAFAC class translation factor GTPase superfamily. Classic translation factor GTPase family. LepA subfamily.

The protein resides in the cell membrane. It catalyses the reaction GTP + H2O = GDP + phosphate + H(+). Required for accurate and efficient protein synthesis under certain stress conditions. May act as a fidelity factor of the translation reaction, by catalyzing a one-codon backward translocation of tRNAs on improperly translocated ribosomes. Back-translocation proceeds from a post-translocation (POST) complex to a pre-translocation (PRE) complex, thus giving elongation factor G a second chance to translocate the tRNAs correctly. Binds to ribosomes in a GTP-dependent manner. The chain is Elongation factor 4 from Streptococcus pyogenes serotype M4 (strain MGAS10750).